The primary structure comprises 327 residues: Peroxidase 15 (327 aa).

The N-terminal stretch at methionine 1–alanine 23 is a signal peptide. Pyrrolidone carboxylic acid is present on glutamine 24. 4 disulfides stabilise this stretch: cysteine 34–cysteine 115, cysteine 67–cysteine 72, cysteine 121–cysteine 323, and cysteine 200–cysteine 232. A glycan (N-linked (GlcNAc...) asparagine) is linked at asparagine 36. Histidine 65 functions as the Proton acceptor in the catalytic mechanism. The Ca(2+) site is built by aspartate 66, valine 69, glycine 71, aspartate 73, and serine 75. N-linked (GlcNAc...) asparagine glycans are attached at residues asparagine 81, asparagine 96, and asparagine 159. Proline 163 is a substrate binding site. N-linked (GlcNAc...) asparagine glycosylation is found at asparagine 168 and asparagine 171. Residue histidine 193 participates in heme b binding. Threonine 194 lines the Ca(2+) pocket. Asparagine 209 and asparagine 221 each carry an N-linked (GlcNAc...) asparagine glycan. Residues aspartate 245, threonine 248, and aspartate 253 each contribute to the Ca(2+) site. Residues asparagine 287 and asparagine 291 are each glycosylated (N-linked (GlcNAc...) asparagine).

The protein belongs to the peroxidase family. Classical plant (class III) peroxidase subfamily. Ca(2+) serves as cofactor. Heme b is required as a cofactor.

It is found in the secreted. The catalysed reaction is 2 a phenolic donor + H2O2 = 2 a phenolic radical donor + 2 H2O. Functionally, removal of H(2)O(2), oxidation of toxic reductants, biosynthesis and degradation of lignin, suberization, auxin catabolism, response to environmental stresses such as wounding, pathogen attack and oxidative stress. These functions might be dependent on each isozyme/isoform in each plant tissue. The polypeptide is Peroxidase 15 (Ipomoea batatas (Sweet potato)).